The primary structure comprises 141 residues: Nucleoside diphosphate kinase (141 aa).

6 residues coordinate ATP: Lys11, Phe59, Arg87, Thr93, Arg104, and Asn114. Residue His117 is the Pros-phosphohistidine intermediate of the active site.

This sequence belongs to the NDK family. In terms of assembly, homotetramer. Mg(2+) serves as cofactor.

The protein resides in the cytoplasm. The catalysed reaction is a 2'-deoxyribonucleoside 5'-diphosphate + ATP = a 2'-deoxyribonucleoside 5'-triphosphate + ADP. It catalyses the reaction a ribonucleoside 5'-diphosphate + ATP = a ribonucleoside 5'-triphosphate + ADP. Functionally, major role in the synthesis of nucleoside triphosphates other than ATP. The ATP gamma phosphate is transferred to the NDP beta phosphate via a ping-pong mechanism, using a phosphorylated active-site intermediate. In Serratia proteamaculans (strain 568), this protein is Nucleoside diphosphate kinase.